The sequence spans 119 residues: Ribonuclease P protein component (119 aa).

This sequence belongs to the RnpA family. In terms of assembly, consists of a catalytic RNA component (M1 or rnpB) and a protein subunit.

The enzyme catalyses Endonucleolytic cleavage of RNA, removing 5'-extranucleotides from tRNA precursor.. Its function is as follows. RNaseP catalyzes the removal of the 5'-leader sequence from pre-tRNA to produce the mature 5'-terminus. It can also cleave other RNA substrates such as 4.5S RNA. The protein component plays an auxiliary but essential role in vivo by binding to the 5'-leader sequence and broadening the substrate specificity of the ribozyme. The chain is Ribonuclease P protein component from Dictyoglomus turgidum (strain DSM 6724 / Z-1310).